A 207-amino-acid chain; its full sequence is Guanylate kinase (207 aa).

The Guanylate kinase-like domain maps to 3–181; the sequence is GQLFVICGPS…AVEMVVSIVR (179 aa). 10 to 17 lines the ATP pocket; it reads GPSGAGKT.

This sequence belongs to the guanylate kinase family.

The protein localises to the cytoplasm. The enzyme catalyses GMP + ATP = GDP + ADP. Functionally, essential for recycling GMP and indirectly, cGMP. This chain is Guanylate kinase (gmk), found in Thermotoga maritima (strain ATCC 43589 / DSM 3109 / JCM 10099 / NBRC 100826 / MSB8).